Consider the following 1228-residue polypeptide: Structural maintenance of chromosomes protein 1 (1228 aa).

32–39 (GPNGAGKS) contacts ATP. Positions 197–510 (NKKRGINAEL…ESKQDAKKRE (314 aa)) form a coiled coil. An SMC hinge domain is found at 522–635 (VKGRIIDLCT…CDSMTVARDL (114 aa)). 3 coiled-coil regions span residues 710–783 (KLHS…KIFS), 814–926 (EFTK…EIDR), and 984–1068 (VEVD…KRLQ).

The protein belongs to the SMC family. SMC1 subfamily. As to quaternary structure, cohesin complexes are composed of the psm1/smc1 and psm3/smc3 heterodimer attached via their SMC hinge domain, rad21/scc1 which link them, and psc3/scc3, which interacts with rad21.

Its subcellular location is the nucleus. The protein localises to the chromosome. Its function is as follows. Involved in chromosome cohesion during cell cycle and in DNA repair. Central component of cohesin complex. The cohesin complex is required for the cohesion of sister chromatids after DNA replication. The cohesin complex apparently forms a large proteinaceous ring within which sister chromatids can be trapped. At anaphase, the complex is cleaved and dissociates from chromatin, allowing sister chromatids to segregate. The sequence is that of Structural maintenance of chromosomes protein 1 (psm1) from Schizosaccharomyces pombe (strain 972 / ATCC 24843) (Fission yeast).